A 437-amino-acid chain; its full sequence is Ribosomal protein uS12 methylthiotransferase RimO (437 aa).

The MTTase N-terminal domain maps to Asn-9–Lys-128. Cys-18, Cys-57, Cys-91, Cys-152, Cys-156, and Cys-159 together coordinate [4Fe-4S] cluster. The region spanning Thr-138–Asp-368 is the Radical SAM core domain. A TRAM domain is found at Gln-371–Ala-437.

It belongs to the methylthiotransferase family. RimO subfamily. It depends on [4Fe-4S] cluster as a cofactor.

The protein resides in the cytoplasm. The enzyme catalyses L-aspartate(89)-[ribosomal protein uS12]-hydrogen + (sulfur carrier)-SH + AH2 + 2 S-adenosyl-L-methionine = 3-methylsulfanyl-L-aspartate(89)-[ribosomal protein uS12]-hydrogen + (sulfur carrier)-H + 5'-deoxyadenosine + L-methionine + A + S-adenosyl-L-homocysteine + 2 H(+). Catalyzes the methylthiolation of an aspartic acid residue of ribosomal protein uS12. The chain is Ribosomal protein uS12 methylthiotransferase RimO from Flavobacterium johnsoniae (strain ATCC 17061 / DSM 2064 / JCM 8514 / BCRC 14874 / CCUG 350202 / NBRC 14942 / NCIMB 11054 / UW101) (Cytophaga johnsonae).